Reading from the N-terminus, the 336-residue chain is Small ribosomal subunit protein uS9m (336 aa).

The segment at 32–81 (STTTTTTTTTTTTTSDEIPTTKPRFQSRFRRNQQPHQQQRSPYTSSQVTE) is disordered. The segment covering 33–45 (TTTTTTTTTTTTT) has biased composition (low complexity). Residues 65–81 (QPHQQQRSPYTSSQVTE) are compositionally biased toward polar residues.

Belongs to the universal ribosomal protein uS9 family. As to quaternary structure, component of the mitochondrial small ribosomal subunit (mt-SSU).

Its subcellular location is the mitochondrion. Its function is as follows. Component of the mitochondrial ribosome (mitoribosome), a dedicated translation machinery responsible for the synthesis of mitochondrial genome-encoded proteins, including at least some of the essential transmembrane subunits of the mitochondrial respiratory chain. The mitoribosomes are attached to the mitochondrial inner membrane and translation products are cotranslationally integrated into the membrane. The polypeptide is Small ribosomal subunit protein uS9m (MRPS9) (Candida albicans (strain SC5314 / ATCC MYA-2876) (Yeast)).